The primary structure comprises 891 residues: MSLRIDVDTNFPECVVDAGKVTLGTQQRQEMDPRLREKQNEIILRAVCALLNSGGGIIKAEIENKGYNYERHGVGLDVPPIFRSHLDKMQKENHFLIFVKSWNTEAGVPLATLCSNLYHRERTSTDVMDSQEALAFLKCRTQTPTNINVSNSLGPQAAQGSVQYEGNINVSAAALFDRKRLQYLEKLNLPESTHVEFVMFSTDVSHCVKDRLPKCVSAFANTEGGYVFFGVHDETCQVIGCEKEKIDLTSLRASIDGCIKKLPVHHFCTQRPEIKYVLNFLEVHDKGALRGYVCAIKVEKFCCAVFAKVPSSWQVKDNRVRQLPTREWTAWMMEADPDLSRCPEMVLQLSLSSATPRSKPVCIHKNSECLKEQQKRYFPVFSDRVVYTPESLYKELFSQHKGLRDLINTEMRPFSQGILIFSQSWAVDLGLQEKQGVICDALLISQNNTPILYTIFSKWDAGCKGYSMIVAYSLKQKLVNKGGYTGRLCITPLVCVLNSDRKAQSVYSSYLQIYPESYNFMTPQHMEALLQSLVIVLLGFKSFLSEELGSEVLNLLTNKQYELLSKNLRKTRELFVHGLPGSGKTILALRIMEKIRNVFHCEPANILYICENQPLKKLVSFSKKNICQPVTRKTFMKNNFEHIQHIIIDDAQNFRTEDGDWYGKAKFITQTARDGPGVLWIFLDYFQTYHLSCSGLPPPSDQYPREEINRVVRNAGPIANYLQQVMQEARQNPPPNLPPGSLVMLYEPKWAQGVPGNLEIIEDLNLEEILIYVANKCRFLLRNGYSPKDIAVLFTKASEVEKYKDRLLTAMRKRKLSQLHEESDLLLQIGDASDVLTDHIVLDSVCRFSGLERNIVFGINPGVAPPAGAYNLLLCLASRAKRHLYILKASV.

Residue Lys-59 forms a Glycyl lysine isopeptide (Lys-Gly) (interchain with G-Cter in SUMO2) linkage. 578-585 (GLPGSGKT) is a binding site for ATP.

It belongs to the Schlafen family. Subgroup III subfamily.

Its function is as follows. May have a role in hematopoietic cell differentiation. The protein is Schlafen family member 5 (SLFN5) of Homo sapiens (Human).